The sequence spans 842 residues: Elongation factor 2 (842 aa).

Positions 17–253 (TNVRNMSVIA…LWGDSYFNPK (237 aa)) constitute a tr-type G domain. Residues 26 to 33 (AHVDHGKS), 158 to 161 (NKVD), and 213 to 215 (SGL) each bind GTP. Diphthamide is present on His-699.

Belongs to the TRAFAC class translation factor GTPase superfamily. Classic translation factor GTPase family. EF-G/EF-2 subfamily.

It localises to the cytoplasm. It carries out the reaction GTP + H2O = GDP + phosphate + H(+). Its function is as follows. Catalyzes the GTP-dependent ribosomal translocation step during translation elongation. During this step, the ribosome changes from the pre-translocational (PRE) to the post-translocational (POST) state as the newly formed A-site-bound peptidyl-tRNA and P-site-bound deacylated tRNA move to the P and E sites, respectively. Catalyzes the coordinated movement of the two tRNA molecules, the mRNA and conformational changes in the ribosome. The sequence is that of Elongation factor 2 (EFT1) from Eremothecium gossypii (strain ATCC 10895 / CBS 109.51 / FGSC 9923 / NRRL Y-1056) (Yeast).